An 801-amino-acid chain; its full sequence is Disks large homolog 4 (801 aa).

An L27 domain is found at 4-60 (KREDTERALQAMEACQSAGDEGFRTRAERLLTIFQSDLFQALLDIQEFYELTVFENQ). 2 PDZ domains span residues 153 to 240 (EITL…LRHK) and 248 to 335 (ELKL…AKTL). Residues 339-373 (HHQDAYNPPDITSSYSPHMDMSDYPQALSPSSPRR) form a disordered region. Residues 393-474 (RVVIHRGSTG…TVTIITQYRP (82 aa)) enclose the PDZ 3 domain. The SH3 domain occupies 507 to 577 (KRSFFIRALF…PSKRRVERKE (71 aa)). In terms of domain architecture, Guanylate kinase-like spans 610–786 (ARPVIILGPS…IYHHVKSVIE (177 aa)).

The protein belongs to the MAGUK family. Post-translationally, ubiquitinated by MDM2 in response to NMDA receptor activation, leading to proteasome-mediated degradation of DLG4 which is required for AMPA receptor endocytosis. Palmitoylated. Palmitoylation is required for targeting to postsynaptic density, plasma membrane and synapses.

Its subcellular location is the cell membrane. It localises to the postsynaptic density. It is found in the synapse. Functionally, postsynaptic scaffolding protein that plays a critical role in synaptogenesis and synaptic plasticity by providing a platform for the postsynaptic clustering of crucial synaptic proteins. The sequence is that of Disks large homolog 4 (dlg4) from Danio rerio (Zebrafish).